The primary structure comprises 605 residues: Elongation factor 4 (605 aa).

In terms of domain architecture, tr-type G spans 11-193 (KRIRNFSIIA…KVVSNIPSPR (183 aa)). Residues 23–28 (DHGKST) and 140–143 (NKID) contribute to the GTP site.

The protein belongs to the TRAFAC class translation factor GTPase superfamily. Classic translation factor GTPase family. LepA subfamily.

It localises to the cell membrane. It carries out the reaction GTP + H2O = GDP + phosphate + H(+). Functionally, required for accurate and efficient protein synthesis under certain stress conditions. May act as a fidelity factor of the translation reaction, by catalyzing a one-codon backward translocation of tRNAs on improperly translocated ribosomes. Back-translocation proceeds from a post-translocation (POST) complex to a pre-translocation (PRE) complex, thus giving elongation factor G a second chance to translocate the tRNAs correctly. Binds to ribosomes in a GTP-dependent manner. This Phytoplasma mali (strain AT) protein is Elongation factor 4.